The chain runs to 372 residues: MAHETTSGRRLPDPTSPSDPTRRTAAIRIPFPARLNPHAERARQHTLQWVQETGLLTGDEATAEYDTLRLERLMAYFYPDASAGDLELAADFNAWFFIFDDQFDGGLGTRPHEIRGVVDALVGTMTTDGAPRPADVRDTPLVRAFRDIWLRSTAGAPYAWRLRFRDHWQAYLAAHVGEAHHRNADRLPSLEQFLEVRRHSIGVQPCLDFTERCGGYALPDELYRSFPLREMREITGDVVIFVNDIVSLVKELAAGDINNSVVIEREHKGCTLEESVEHITALANARTARFARLAASLPGTLADLGVPAPSREHVSHYVDGMRHVMAGNLSWSLATSRYDETGIAAVSGGRRRPWDGLTTATGTASPRHPRRA.

The segment covering 1-12 (MAHETTSGRRLP) has biased composition (basic and acidic residues). A disordered region spans residues 1–23 (MAHETTSGRRLPDPTSPSDPTRR). Mg(2+)-binding residues include aspartate 100 and aspartate 104. The DDXXD motif signature appears at 100–104 (DDQFD). Arginine 197 serves as a coordination point for substrate. Mg(2+)-binding residues include asparagine 243 and serine 247. Lysine 250 is a binding site for substrate. Position 251 (glutamate 251) interacts with Mg(2+). Position 337–338 (337–338 (RY)) interacts with substrate. The interval 349-372 (GRRRPWDGLTTATGTASPRHPRRA) is disordered.

It belongs to the terpene synthase family. It depends on Mg(2+) as a cofactor.

It carries out the reaction (2E,6E)-farnesyl diphosphate + H2O = (+)-(2S,3R,9R)-pristinol + diphosphate. It participates in secondary metabolite biosynthesis; terpenoid biosynthesis. Catalyzes the conversion of (2E,6E)-farnesyl diphosphate (FPP) to yield a new 5-8 bicyclic (pristinane) sesquiterpenol (+)-(2S,3R,9R)-pristinol via a 1,11-cyclization, which requires the abstraction of the pyrophosphate from FPP to yield the humulyl cation. The only accepted substrate is farnesyl diphosphate (FPP). The sequence is that of Pristinol synthase from Streptomyces pristinaespiralis (strain ATCC 25486 / DSM 40338 / CBS 914.69 / JCM 4507 / KCC S-0507 / NBRC 13074 / NRRL 2958 / 5647).